Here is a 341-residue protein sequence, read N- to C-terminus: tRNA N6-adenosine threonylcarbamoyltransferase (341 aa).

Fe cation contacts are provided by His-111 and His-115. Residues 134–138 (LVSGG), Asp-167, Gly-180, and Asn-272 contribute to the substrate site. Residue Asp-300 coordinates Fe cation.

This sequence belongs to the KAE1 / TsaD family. It depends on Fe(2+) as a cofactor.

It is found in the cytoplasm. It catalyses the reaction L-threonylcarbamoyladenylate + adenosine(37) in tRNA = N(6)-L-threonylcarbamoyladenosine(37) in tRNA + AMP + H(+). Its function is as follows. Required for the formation of a threonylcarbamoyl group on adenosine at position 37 (t(6)A37) in tRNAs that read codons beginning with adenine. Is involved in the transfer of the threonylcarbamoyl moiety of threonylcarbamoyl-AMP (TC-AMP) to the N6 group of A37, together with TsaE and TsaB. TsaD likely plays a direct catalytic role in this reaction. The polypeptide is tRNA N6-adenosine threonylcarbamoyltransferase (Blochmanniella pennsylvanica (strain BPEN)).